The chain runs to 78 residues: Beta-defensin 105 (78 aa).

A signal peptide spans 1 to 27 (MALIRKTFYFLFAMFFILVQLPSGCQA). Intrachain disulfides connect cysteine 43–cysteine 74, cysteine 53–cysteine 67, and cysteine 57–cysteine 73.

The protein belongs to the beta-defensin family. As to expression, specifically expressed in testis.

Its subcellular location is the secreted. Its function is as follows. Has antibacterial activity. The polypeptide is Beta-defensin 105 (DEFB105A) (Homo sapiens (Human)).